We begin with the raw amino-acid sequence, 558 residues long: Potassium-transporting ATPase potassium-binding subunit (558 aa).

12 helical membrane passes run 1–21, 60–80, 129–149, 169–189, 246–266, 281–301, 326–346, 353–373, 376–396, 415–435, 485–505, and 523–543; these read MSIV…SRYL, IKHF…LLLI, VITF…IAML, FIVR…ISQG, WSNY…VFLF, IMIF…CLYF, FGIG…TGTV, LTPL…VFGG, VGLM…SLMI, IALS…LAFI, IVML…VSSL, and LFFS…TFLP.

This sequence belongs to the KdpA family. As to quaternary structure, the system is composed of three essential subunits: KdpA, KdpB and KdpC.

Its subcellular location is the cell membrane. Its function is as follows. Part of the high-affinity ATP-driven potassium transport (or Kdp) system, which catalyzes the hydrolysis of ATP coupled with the electrogenic transport of potassium into the cytoplasm. This subunit binds the extracellular potassium ions and delivers the ions to the membrane domain of KdpB through an intramembrane tunnel. The polypeptide is Potassium-transporting ATPase potassium-binding subunit (Staphylococcus haemolyticus (strain JCSC1435)).